The following is a 279-amino-acid chain: Tryptophan synthase alpha chain (279 aa).

Catalysis depends on proton acceptor residues Glu50 and Asp61.

Belongs to the TrpA family. In terms of assembly, tetramer of two alpha and two beta chains.

It carries out the reaction (1S,2R)-1-C-(indol-3-yl)glycerol 3-phosphate + L-serine = D-glyceraldehyde 3-phosphate + L-tryptophan + H2O. It participates in amino-acid biosynthesis; L-tryptophan biosynthesis; L-tryptophan from chorismate: step 5/5. The alpha subunit is responsible for the aldol cleavage of indoleglycerol phosphate to indole and glyceraldehyde 3-phosphate. In Rhizobium etli (strain ATCC 51251 / DSM 11541 / JCM 21823 / NBRC 15573 / CFN 42), this protein is Tryptophan synthase alpha chain.